We begin with the raw amino-acid sequence, 80 residues long: Conotoxin Cl9.5 (80 aa).

A signal peptide spans 1–23; sequence MNCYLILTVALLLTSAMTGTTTA. A propeptide spanning residues 24–37 is cleaved from the precursor; the sequence is GQLNTKGVTLREDD. Disulfide bonds link cysteine 42–cysteine 59, cysteine 47–cysteine 69, and cysteine 49–cysteine 74.

In terms of tissue distribution, expressed by the venom duct.

The protein resides in the secreted. The sequence is that of Conotoxin Cl9.5 from Californiconus californicus (California cone).